Here is a 121-residue protein sequence, read N- to C-terminus: Ribosome-binding factor A (121 aa).

This sequence belongs to the RbfA family. In terms of assembly, monomer. Binds 30S ribosomal subunits, but not 50S ribosomal subunits or 70S ribosomes.

It is found in the cytoplasm. Its function is as follows. One of several proteins that assist in the late maturation steps of the functional core of the 30S ribosomal subunit. Associates with free 30S ribosomal subunits (but not with 30S subunits that are part of 70S ribosomes or polysomes). Required for efficient processing of 16S rRNA. May interact with the 5'-terminal helix region of 16S rRNA. This Oenococcus oeni (strain ATCC BAA-331 / PSU-1) protein is Ribosome-binding factor A.